A 187-amino-acid polypeptide reads, in one-letter code: Cytokinin riboside 5'-monophosphate phosphoribohydrolase (187 aa).

Residue Lys-74 forms an Isoglutamyl lysine isopeptide (Lys-Gln) (interchain with Q-Cter in protein Pup) linkage. Residues Glu-80, 98–99 (RK), 115–121 (GVGTLDE), and Thr-127 each bind substrate.

Belongs to the LOG family. As to quaternary structure, homodimer. Pupylated at Lys-74 by the prokaryotic ubiquitin-like protein Pup, which leads to its degradation by the proteasome. The proteasomal control of cytokinin synthesis is essential to protect M.tuberculosis against host-produced NO.

The enzyme catalyses N(6)-(dimethylallyl)adenosine 5'-phosphate + H2O = N(6)-dimethylallyladenine + D-ribose 5-phosphate. It catalyses the reaction 9-ribosyl-trans-zeatin 5'-phosphate + H2O = trans-zeatin + D-ribose 5-phosphate. Catalyzes the hydrolytic removal of ribose 5'-monophosphate from nitrogen N6-modified adenosines, the final step of bioactive cytokinin synthesis. Is involved in the synthesis of isopentenyladenine (iP) and 2-methylthio-iP (2MeS-iP), the most abundant cytokinins detected in M.tuberculosis lysates and supernatants. Is also able to convert trans-zeatin-riboside monophosphate (tZRMP) to trans-zeatin (tZ) in vitro; however, it may not be involved in the biosynthesis of this minor cytokinin in vivo. Accumulation of Rv1205 sensitizes M.tuberculosis to nitric oxide since cytokinin breakdown products synergize with NO to kill M.tuberculosis. Shows a slow AMP hydrolase activity, but is not able to hydrolyze ATP. Displays no lysine decarboxylase (LDC) activity (L-lysine conversion to cadaverine). The protein is Cytokinin riboside 5'-monophosphate phosphoribohydrolase of Mycobacterium tuberculosis (strain ATCC 25618 / H37Rv).